We begin with the raw amino-acid sequence, 213 residues long: uncharacterized protein (213 aa).

2 coiled-coil regions span residues 54–78 (KEQTKLNNLIEKGKQMLKEYNNLKL) and 108–151 (VKDV…STSK). Residues 122 to 142 (IEKEKEEEKAAKKAEKAEEKK) are compositionally biased toward basic and acidic residues. The disordered stretch occupies residues 122-213 (IEKEKEEEKA…FGGKPTGQIW (92 aa)). Residues 146–188 (KNSTSKSGSKSSKSSSGSSKSSSKSSKSSKSSSGSSKSSSKSS) are compositionally biased toward low complexity. Residues 189–199 (KNSKKSSKKSN) show a composition bias toward basic residues.

The protein belongs to the mimivirus R546 family.

This is an uncharacterized protein from Acanthamoeba polyphaga (Amoeba).